Consider the following 62-residue polypeptide: Large ribosomal subunit protein eL24 (62 aa).

Cysteine 6, cysteine 9, cysteine 32, and cysteine 36 together coordinate Zn(2+). A C4-type zinc finger spans residues 6 to 36 (CYFCGKMLEPGTGKLYVKKDGSTYFMCSSKC).

It belongs to the eukaryotic ribosomal protein eL24 family. In terms of assembly, part of the 50S ribosomal subunit. Forms a cluster with proteins L3 and L14. The cofactor is Zn(2+).

Functionally, binds to the 23S rRNA. In Methanosarcina acetivorans (strain ATCC 35395 / DSM 2834 / JCM 12185 / C2A), this protein is Large ribosomal subunit protein eL24.